Here is a 339-residue protein sequence, read N- to C-terminus: Deubiquitinase and deneddylase Dub2 (339 aa).

A helical membrane pass occupies residues Ile36–Phe56. Active-site residues include His203, Asp220, and Cys282.

This sequence belongs to the peptidase C48 family.

The protein resides in the secreted. It is found in the host cell. The protein localises to the membrane. In terms of biological role, effector proteins function to alter host cell physiology and promote bacterial survival in host tissues. This protease possesses deubiquitinating and deneddylating activities. This chain is Deubiquitinase and deneddylase Dub2 (cdu2), found in Chlamydia trachomatis serovar A (strain ATCC VR-571B / DSM 19440 / HAR-13).